A 1602-amino-acid polypeptide reads, in one-letter code: Calmodulin-regulated spectrin-associated protein 1 (1602 aa).

In terms of domain architecture, Calponin-homology (CH) spans 216–331 (ESPAHQKVRY…FIAELFWWFE (116 aa)). Phosphoserine is present on residues Ser-217, Ser-371, Ser-375, Ser-416, and Ser-431. Positions 426–471 (QKQQKSIQGEDIPDQRHRSNSLTRVDGQPRGAAIAWPEKKTRPASQ) are disordered. Thr-512 carries the post-translational modification Phosphothreonine. Ser-563, Ser-575, and Ser-589 each carry phosphoserine. Basic and acidic residues predominate over residues 603 to 620 (AKEKQVITKEDERGEGRP). The segment at 603–637 (AKEKQVITKEDERGEGRPRSIVSRRPSEGPQPLVR) is disordered. Phosphoserine occurs at positions 629, 722, 728, 738, and 740. A compositionally biased stretch (basic and acidic residues) spans 772 to 789 (KLQEDMKVKEHEDKDDAS). Disordered stretches follow at residues 772–808 (KLQE…VSMA) and 825–870 (LNSC…GKDP). Composition is skewed to low complexity over residues 797 to 808 (STASQMSSVSMA) and 830 to 841 (TKSSTSSSQKTT). Over residues 857–869 (QKREQSPSQHGKD) the composition is skewed to basic and acidic residues. The sufficient for interaction with SPTBN1 stretch occupies residues 871-892 (ASLLASELVQLHMQLEEKRRAI). Coiled coils occupy residues 873-909 (LLAS…QRLK) and 1016-1048 (DVNE…QEQL). A sufficient for interaction with calmodulin region spans residues 903–922 (SARQRLKLGKAAFLHVVKKG). Disordered stretches follow at residues 1075-1165 (FVEP…GKCL), 1206-1226 (KEVG…VEEP), and 1301-1448 (ARVR…DWET). Ser-1080 is subject to Phosphoserine. Residues 1103 to 1114 (RPAELKVPKDRP) are compositionally biased toward basic and acidic residues. Over residues 1115-1127 (QGSSRSKTPTPSV) the composition is skewed to polar residues. Over residues 1206–1220 (KEVGSSSSDVSGKES) the composition is skewed to low complexity. The stretch at 1291–1343 (LLKQQRKAEEARVRKQQLEAEVELKRDEARRKAEEDRVRKEEEKARRELIKQE) forms a coiled coil. Basic and acidic residues predominate over residues 1301 to 1346 (ARVRKQQLEAEVELKRDEARRKAEEDRVRKEEEKARRELIKQEYLR). Residues 1361-1372 (PKSKPKKPRPKS) are compositionally biased toward basic residues. The segment covering 1380-1392 (SDSGTKCSSTPDN) has biased composition (polar residues). A compositionally biased stretch (low complexity) spans 1393–1410 (LSRTQSGSSLSLASAATT). Residues Ser-1398 and Ser-1427 each carry the phosphoserine modification. Residues 1463-1597 (GPKLFKEPSS…QPKRPAVPKK (135 aa)) enclose the CKK domain. Tyr-1537 carries the post-translational modification Phosphotyrosine.

It belongs to the CAMSAP1 family. In terms of assembly, interacts with spectrin via SPTBN1; the interaction is direct. Interacts with calmodulin; calcium-dependent it prevents interaction with spectrin.

Its subcellular location is the cytoplasm. The protein localises to the cytoskeleton. Its function is as follows. Key microtubule-organizing protein that specifically binds the minus-end of non-centrosomal microtubules and regulates their dynamics and organization. Specifically recognizes growing microtubule minus-ends and stabilizes microtubules. Acts on free microtubule minus-ends that are not capped by microtubule-nucleating proteins or other factors and protects microtubule minus-ends from depolymerization. In contrast to CAMSAP2 and CAMSAP3, tracks along the growing tips of minus-end microtubules without significantly affecting the polymerization rate: binds at the very tip of the microtubules minus-end and acts as a minus-end tracking protein (-TIP) that dissociates from microtubules after allowing tubulin incorporation. Through interaction with spectrin may regulate neurite outgrowth. The polypeptide is Calmodulin-regulated spectrin-associated protein 1 (CAMSAP1) (Homo sapiens (Human)).